A 460-amino-acid chain; its full sequence is UDP-N-acetylmuramate--L-alanine ligase (460 aa).

118 to 124 (GAHGKTT) is an ATP binding site.

Belongs to the MurCDEF family.

It localises to the cytoplasm. It carries out the reaction UDP-N-acetyl-alpha-D-muramate + L-alanine + ATP = UDP-N-acetyl-alpha-D-muramoyl-L-alanine + ADP + phosphate + H(+). Its pathway is cell wall biogenesis; peptidoglycan biosynthesis. Functionally, cell wall formation. The chain is UDP-N-acetylmuramate--L-alanine ligase from Clostridium botulinum (strain Eklund 17B / Type B).